Here is a 372-residue protein sequence, read N- to C-terminus: Cyclin-J (372 aa).

In terms of domain architecture, Cyclin N-terminal spans 15 to 143; sequence DIHQALRYKE…LLETFQWNLC (129 aa).

This sequence belongs to the cyclin family.

This is Cyclin-J (CCNJ) from Homo sapiens (Human).